The sequence spans 73 residues: Photosystem I reaction center subunit IV (73 aa).

Belongs to the PsaE family.

It is found in the cellular thylakoid membrane. Stabilizes the interaction between PsaC and the PSI core, assists the docking of the ferredoxin to PSI and interacts with ferredoxin-NADP oxidoreductase. The sequence is that of Photosystem I reaction center subunit IV from Synechococcus sp. (strain JA-3-3Ab) (Cyanobacteria bacterium Yellowstone A-Prime).